Reading from the N-terminus, the 35-residue chain is Coenzyme PQQ synthesis protein A (35 aa).

Positions 16 to 20 form a cross-link, pyrroloquinoline quinone (Glu-Tyr); it reads EINMY.

The protein belongs to the PqqA family.

The protein operates within cofactor biosynthesis; pyrroloquinoline quinone biosynthesis. Functionally, required for coenzyme pyrroloquinoline quinone (PQQ) biosynthesis. PQQ is probably formed by cross-linking a specific glutamate to a specific tyrosine residue and excising these residues from the peptide. This Ruegeria pomeroyi (strain ATCC 700808 / DSM 15171 / DSS-3) (Silicibacter pomeroyi) protein is Coenzyme PQQ synthesis protein A.